A 167-amino-acid chain; its full sequence is MKIGVYPGSFDPVTNGHLDIIERASKIFDKLIVAVLVNPNKTPVFDIEERVELLKETTEHLPNVEVKAFKGLLIDFMKQENAKVIVKGLRAVSDFEYEFQMALLNKKLEPSIETIFMMTNSKYSYLSSSMVKEVARFGGCIEDLVPEKIAKKVMKKLNKKYTEMEEK.

Residue Ser9 coordinates substrate. Residues 9 to 10 (SF) and His17 each bind ATP. Substrate contacts are provided by Lys41, Leu73, and Lys87. Residues 88 to 90 (GLR), Glu98, and 123 to 129 (YSYLSSS) each bind ATP.

It belongs to the bacterial CoaD family. As to quaternary structure, homohexamer. It depends on Mg(2+) as a cofactor.

Its subcellular location is the cytoplasm. The catalysed reaction is (R)-4'-phosphopantetheine + ATP + H(+) = 3'-dephospho-CoA + diphosphate. Its pathway is cofactor biosynthesis; coenzyme A biosynthesis; CoA from (R)-pantothenate: step 4/5. In terms of biological role, reversibly transfers an adenylyl group from ATP to 4'-phosphopantetheine, yielding dephospho-CoA (dPCoA) and pyrophosphate. The polypeptide is Phosphopantetheine adenylyltransferase (Caldicellulosiruptor bescii (strain ATCC BAA-1888 / DSM 6725 / KCTC 15123 / Z-1320) (Anaerocellum thermophilum)).